A 387-amino-acid polypeptide reads, in one-letter code: Structural protein ORF387 (387 aa).

The stretch at 315–387 (KTFQEMVKVA…EEKNNTVKLS (73 aa)) forms a coiled coil. Positions 365 to 387 (LTEEQQQQNETEEEEKNNTVKLS) are disordered.

Its subcellular location is the virion. This is Structural protein ORF387 from Acidianus convivator (ATV).